Reading from the N-terminus, the 308-residue chain is Aspartate carbamoyltransferase catalytic subunit (308 aa).

Carbamoyl phosphate-binding residues include Arg55 and Thr56. Lys85 is an L-aspartate binding site. 3 residues coordinate carbamoyl phosphate: Arg106, His135, and Gln138. Arg168 and Arg229 together coordinate L-aspartate. Carbamoyl phosphate contacts are provided by Leu267 and Pro268.

Belongs to the aspartate/ornithine carbamoyltransferase superfamily. ATCase family. In terms of assembly, heterododecamer (2C3:3R2) of six catalytic PyrB chains organized as two trimers (C3), and six regulatory PyrI chains organized as three dimers (R2).

It carries out the reaction carbamoyl phosphate + L-aspartate = N-carbamoyl-L-aspartate + phosphate + H(+). It participates in pyrimidine metabolism; UMP biosynthesis via de novo pathway; (S)-dihydroorotate from bicarbonate: step 2/3. Functionally, catalyzes the condensation of carbamoyl phosphate and aspartate to form carbamoyl aspartate and inorganic phosphate, the committed step in the de novo pyrimidine nucleotide biosynthesis pathway. The protein is Aspartate carbamoyltransferase catalytic subunit of Laribacter hongkongensis (strain HLHK9).